The following is a 479-amino-acid chain: Cardiolipin synthase A (479 aa).

2 helical membrane passes run 8–28 (FFGYLLGMIHLLGIVAALHAL) and 38–58 (IAWAMPLLFIPYLTLIPYLIF). PLD phosphodiesterase domains are found at residues 218-245 (VNFRNHRKIVVVDGLLGFIGGHNVGDEY) and 392-419 (QPGFLHQKVVLVDDDVSAIGSANLDNRS). Residues H223, K225, D230, H397, K399, and D404 contribute to the active site.

Belongs to the phospholipase D family. Cardiolipin synthase subfamily. ClsA sub-subfamily.

The protein localises to the cell inner membrane. The enzyme catalyses 2 a 1,2-diacyl-sn-glycero-3-phospho-(1'-sn-glycerol) = a cardiolipin + glycerol. In terms of biological role, catalyzes the reversible phosphatidyl group transfer from one phosphatidylglycerol molecule to another to form cardiolipin (CL) (diphosphatidylglycerol) and glycerol. This is Cardiolipin synthase A from Pseudomonas putida (strain ATCC 700007 / DSM 6899 / JCM 31910 / BCRC 17059 / LMG 24140 / F1).